A 342-amino-acid polypeptide reads, in one-letter code: MKALAKLERGPGLTLTRVKRPEVGHNDVLIKIHRTAICGTDIHIWKWDDWAQKTIPVPMHVGHEYVGEIVEMGQEVRGFAIGDRVSGEGHITCGFCRNCRAGRRHLCRNTVGVGVNREGAFAEYLAIPAFNAFKIPPEISDDLASIFDPFGNATHTALSFNLVGEDVLITGAGPIGVMAAAIAKHVGARNVVITDINDYRLELARKMGATRAVNVSRESLRDVMADLHMTEGFDVGLEMSGVPSAFTSMLEAMNHGGKIALLGIPPAQTAIDWNQVIFKGLEIKGIYGREMFETWYKMVAMLQSGLDLSPIITHRFAADDYEKGFAAMLSGESGKVILDWTV.

C38 lines the Zn(2+) pocket. Catalysis depends on charge relay system residues T40 and H43. 6 residues coordinate Zn(2+): H63, E64, C93, C96, C99, and C107. NAD(+) is bound by residues I175, D195, R200, 262–264, and 286–287; these read LGI and IY.

It belongs to the zinc-containing alcohol dehydrogenase family. In terms of assembly, homotetramer. The cofactor is Zn(2+).

It localises to the cytoplasm. The enzyme catalyses L-threonine + NAD(+) = (2S)-2-amino-3-oxobutanoate + NADH + H(+). It participates in amino-acid degradation; L-threonine degradation via oxydo-reductase pathway; glycine from L-threonine: step 1/2. Catalyzes the NAD(+)-dependent oxidation of L-threonine to 2-amino-3-ketobutyrate. This Burkholderia ambifaria (strain ATCC BAA-244 / DSM 16087 / CCUG 44356 / LMG 19182 / AMMD) (Burkholderia cepacia (strain AMMD)) protein is L-threonine 3-dehydrogenase.